The primary structure comprises 639 residues: Chaperone protein HtpG (639 aa).

Residues 1-347 (MSHQETHGFQ…SNDLPLNVSR (347 aa)) are a; substrate-binding. The tract at residues 348 to 564 (EILQDNKITT…AGEMSSQMIK (217 aa)) is b. The interval 565-639 (LMQAAGQAVT…MNKMLLASVK (75 aa)) is c.

It belongs to the heat shock protein 90 family. Homodimer.

Its subcellular location is the cytoplasm. Functionally, molecular chaperone. Has ATPase activity. The chain is Chaperone protein HtpG from Shewanella loihica (strain ATCC BAA-1088 / PV-4).